Reading from the N-terminus, the 612-residue chain is uncharacterized protein (612 aa).

The segment at 171–217 is disordered; sequence MLPPSLVQRNNATTSPTTDSASENNESVPSLTSSVSTSSSVYSSWNP. The span at 177–196 shows a compositional bias: polar residues; the sequence is VQRNNATTSPTTDSASENNE. A compositionally biased stretch (low complexity) spans 197 to 214; that stretch reads SVPSLTSSVSTSSSVYSS.

This sequence to yeast YNL018c.

This is an uncharacterized protein from Saccharomyces cerevisiae (strain ATCC 204508 / S288c) (Baker's yeast).